Here is an 838-residue protein sequence, read N- to C-terminus: Serine/threonine-protein phosphatase 4 regulatory subunit 3 (838 aa).

Disordered stretches follow at residues 452–482 and 745–838; these read NNCN…SPSR and AINK…SESS. Positions 747 to 761 are enriched in polar residues; the sequence is NKQQDNNGERNTTTG. Positions 783 to 792 are enriched in acidic residues; the sequence is SDGENNENNE.

In terms of assembly, regulatory subunit 3 (R3) of the histone H2A phosphatase complex (HTP-C) consisting of PPH3, PSY2 and PSY4.

The protein localises to the nucleus. Functionally, core regulatory subunit of the histone H2A phosphatase complex, which dephosphorylates H2AS128ph (gamma-H2A) that has been displaced from sites of DNA lesions in the double-stranded DNA break repair process. Dephosphorylation is necessary for efficient recovery from the DNA damage checkpoint. The chain is Serine/threonine-protein phosphatase 4 regulatory subunit 3 (PSY2) from Eremothecium gossypii (strain ATCC 10895 / CBS 109.51 / FGSC 9923 / NRRL Y-1056) (Yeast).